The primary structure comprises 329 residues: Endochitinase A (329 aa).

The N-terminal stretch at 1 to 23 is a signal peptide; that stretch reads MRLCKFTALSSLLFSLLLLSASA. The Chitin-binding type-1 domain maps to 24–65; it reads EQCGSQAGGARCPSGLCCSKFGWCGNTNDYCGPGNCQSQCPG. Intrachain disulfides connect C26-C41, C35-C47, C40-C54, and C59-C63. The residue at position 67 (P67) is a 4-hydroxyproline; partial. Residues P69, P71, P72, and P74 each carry the 4-hydroxyproline modification. A 4-hydroxyproline; partial modification is found at P75. Disulfide bonds link C101-C163, C175-C183, and C282-C314. The active-site Proton donor is the E145. The propeptide at 323-329 is removed in mature form; it reads GLLVDTM.

Belongs to the glycosyl hydrolase 19 family. Chitinase class I subfamily. The 4-hydroxyproline residues are not glycosylated in this plant vacuolar protein.

It localises to the vacuole. The enzyme catalyses Random endo-hydrolysis of N-acetyl-beta-D-glucosaminide (1-&gt;4)-beta-linkages in chitin and chitodextrins.. Its function is as follows. Defense against chitin-containing fungal pathogens. This is Endochitinase A (CHN48) from Nicotiana tabacum (Common tobacco).